A 269-amino-acid polypeptide reads, in one-letter code: Formamidopyrimidine-DNA glycosylase (269 aa).

Residue Pro2 is the Schiff-base intermediate with DNA of the active site. The active-site Proton donor is the Glu3. The active-site Proton donor; for beta-elimination activity is Lys57. Residues His90, Arg109, and Lys150 each contribute to the DNA site. An FPG-type zinc finger spans residues Arg235–Val269. Arg259 serves as the catalytic Proton donor; for delta-elimination activity.

Belongs to the FPG family. As to quaternary structure, monomer. Zn(2+) serves as cofactor.

It carries out the reaction Hydrolysis of DNA containing ring-opened 7-methylguanine residues, releasing 2,6-diamino-4-hydroxy-5-(N-methyl)formamidopyrimidine.. It catalyses the reaction 2'-deoxyribonucleotide-(2'-deoxyribose 5'-phosphate)-2'-deoxyribonucleotide-DNA = a 3'-end 2'-deoxyribonucleotide-(2,3-dehydro-2,3-deoxyribose 5'-phosphate)-DNA + a 5'-end 5'-phospho-2'-deoxyribonucleoside-DNA + H(+). In terms of biological role, involved in base excision repair of DNA damaged by oxidation or by mutagenic agents. Acts as a DNA glycosylase that recognizes and removes damaged bases. Has a preference for oxidized purines, such as 7,8-dihydro-8-oxoguanine (8-oxoG). Has AP (apurinic/apyrimidinic) lyase activity and introduces nicks in the DNA strand. Cleaves the DNA backbone by beta-delta elimination to generate a single-strand break at the site of the removed base with both 3'- and 5'-phosphates. This is Formamidopyrimidine-DNA glycosylase from Pectobacterium atrosepticum (strain SCRI 1043 / ATCC BAA-672) (Erwinia carotovora subsp. atroseptica).